The chain runs to 685 residues: Methionine--tRNA ligase (685 aa).

Residues 12-22 (PYANGSIHLGH) carry the 'HIGH' region motif. Residues C143, C146, C156, and C159 each coordinate Zn(2+). The short motif at 339–343 (KMSKS) is the 'KMSKS' region element. Residue K342 participates in ATP binding. The tRNA-binding domain maps to 582-685 (DFMKIDMRVA…AGAQPGDKVG (104 aa)).

It belongs to the class-I aminoacyl-tRNA synthetase family. MetG type 1 subfamily. Homodimer. The cofactor is Zn(2+).

It is found in the cytoplasm. The catalysed reaction is tRNA(Met) + L-methionine + ATP = L-methionyl-tRNA(Met) + AMP + diphosphate. Is required not only for elongation of protein synthesis but also for the initiation of all mRNA translation through initiator tRNA(fMet) aminoacylation. This is Methionine--tRNA ligase from Neisseria meningitidis serogroup A / serotype 4A (strain DSM 15465 / Z2491).